The chain runs to 494 residues: MGNHLQISVSLVLCIFIQSSACGQGVGTEPFGRNLGATEERKPLQKPEIRFLLFKDESDRLGCQLRPQHPETLQECGFNSSHPLVMIIHGWSVDGLLETWIWKIVGALKSRQSQPVNVGLVDWISLAYQHYAIAVRNTRVVGQEVAALLLWLEESMKFSRSKVHLIGYSLGAHVSGFAGSSMGGKRKIGRITGLDPAGPMFEGTSPNERLSPDDANFVDAIHTFTREHMGLSVGIKQPIAHYDFYPNGGSFQPGCHFLELYKHIAEHGLNAITQTINCAHERSVHLFIDSLQHSNLQNTGFQCSNMDSFSQGLCLNCKKGRCNSLGYDIRRIGHVKSKTLFLITRAQSPFKVYHYQFKIQFINQMEKPMEPTFTMTLLGTKEEIKKIPITLGEGITSNKTYSLLITLNKDIGELIMLKFKWENSAVWANVWNTVQTIMLWDTEPHYAGLIVKTIWVKAGETQQRMTFCPDNVDDLQLHPTQEKVFVKCDLKSKD.

Residues 1–21 (MGNHLQISVSLVLCIFIQSSA) form the signal peptide. N-linked (GlcNAc...) asparagine glycosylation occurs at asparagine 79. The Nucleophile role is filled by serine 169. Aspartate 195 functions as the Charge relay system in the catalytic mechanism. Residues 255 to 278 (CHFLELYKHIAEHGLNAITQTINC) are essential for determining substrate specificity. Residue histidine 280 is the Charge relay system of the active site. Residues 353 to 487 (YHYQFKIQFI…HPTQEKVFVK (135 aa)) enclose the PLAT domain. N-linked (GlcNAc...) asparagine glycosylation is present at asparagine 398.

This sequence belongs to the AB hydrolase superfamily. Lipase family. As to quaternary structure, homodimer.

It is found in the secreted. It catalyses the reaction a triacylglycerol + H2O = a diacylglycerol + a fatty acid + H(+). The enzyme catalyses a 1-acyl-sn-glycero-3-phosphocholine + H2O = sn-glycerol 3-phosphocholine + a fatty acid + H(+). It carries out the reaction a 1,2-diacyl-sn-glycero-3-phosphocholine + H2O = a 2-acyl-sn-glycero-3-phosphocholine + a fatty acid + H(+). The catalysed reaction is 1,2-di-(9Z-octadecenoyl)-sn-glycerol + H2O = 2-(9Z-octadecenoyl)-glycerol + (9Z)-octadecenoate + H(+). It catalyses the reaction 1,2,3-tri-(9Z-octadecenoyl)-glycerol + H2O = 2,3-di-(9Z)-octadecenoyl-sn-glycerol + (9Z)-octadecenoate + H(+). The enzyme catalyses 1-(9Z-octadecenoyl)-sn-glycero-3-phospho-L-serine + H2O = sn-glycero-3-phospho-L-serine + (9Z)-octadecenoate + H(+). It carries out the reaction 1-hexadecanoyl-sn-glycero-3-phosphocholine + H2O = sn-glycerol 3-phosphocholine + hexadecanoate + H(+). The catalysed reaction is 1,3-di-(9Z-octadecenoyl)-glycerol + H2O = 3-(9Z-octadecenoyl)-sn-glycerol + (9Z)-octadecenoate + H(+). It catalyses the reaction 1,2,3-tri-(9Z-octadecenoyl)-glycerol + H2O = di-(9Z)-octadecenoylglycerol + (9Z)-octadecenoate + H(+). The enzyme catalyses 1,2-di-(9Z-octadecenoyl)-sn-glycero-3-phosphocholine + H2O = (9Z-octadecenoyl)-sn-glycero-3-phosphocholine + (9Z)-octadecenoate + H(+). It carries out the reaction 1,2,3-tributanoylglycerol + H2O = dibutanoylglycerol + butanoate + H(+). The catalysed reaction is 1,2-dihexadecanoyl-sn-glycero-3-phosphocholine + H2O = hexadecanoyl-sn-glycero-3-phosphocholine + hexadecanoate + H(+). Phospholipase A1 and lysophospholipase activities are inhibited by annexin II. In terms of biological role, catalyzes the hydrolysis of triglycerides and phospholipids present in circulating plasma lipoproteins, including chylomicrons, intermediate density lipoproteins (IDL), low density lipoproteins (LDL) of large size and high density lipoproteins (HDL), releasing free fatty acids (FFA) and smaller lipoprotein particles. Also exhibits lysophospholipase activity. Can hydrolyze both neutral lipid and phospholipid substrates but shows a greater binding affinity for neutral lipid substrates than phospholipid substrates. In native LDL, preferentially hydrolyzes the phosphatidylcholine species containing polyunsaturated fatty acids at sn-2 position. This is Hepatic triacylglycerol lipase (Lipc) from Rattus norvegicus (Rat).